Reading from the N-terminus, the 280-residue chain is uncharacterized protein (280 aa).

Residue 3 to 29 coordinates NADP(+); it reads KKIAIVTGASSGFGLLAAVKLARSFFV. Ser-139 contacts substrate. Tyr-152 functions as the Proton acceptor in the catalytic mechanism.

The protein belongs to the short-chain dehydrogenases/reductases (SDR) family.

This is an uncharacterized protein from Bacillus subtilis (strain 168).